The chain runs to 89 residues: Bombyxin A-2 (89 aa).

The first 19 residues, 1–19 (MKILLAIALMLSTVMWVST), serve as a signal peptide directing secretion. Q20 is modified (pyrrolidone carboxylic acid). Disulfide bonds link C29-C76, C41-C89, and C75-C80. A propeptide spans 50–68 (SDAQFASYGSAWLMPYSAG) (c peptide like).

Belongs to the insulin family. Heterodimer of a B chain and an A chain linked by two disulfide bonds.

The protein localises to the secreted. Brain peptide responsible for activation of prothoracic glands to produce ecdysone in insects. This chain is Bombyxin A-2 (BBXA2), found in Bombyx mori (Silk moth).